Here is a 272-residue protein sequence, read N- to C-terminus: NH(3)-dependent NAD(+) synthetase (272 aa).

45–52 (GISGGQDS) serves as a coordination point for ATP. Residue aspartate 51 participates in Mg(2+) binding. Arginine 138 is a binding site for deamido-NAD(+). Residue threonine 158 coordinates ATP. Glutamate 163 serves as a coordination point for Mg(2+). The deamido-NAD(+) site is built by lysine 171 and aspartate 178. 2 residues coordinate ATP: lysine 187 and threonine 209. Residue 258–259 (HK) coordinates deamido-NAD(+).

Belongs to the NAD synthetase family. Homodimer.

It catalyses the reaction deamido-NAD(+) + NH4(+) + ATP = AMP + diphosphate + NAD(+) + H(+). Its pathway is cofactor biosynthesis; NAD(+) biosynthesis; NAD(+) from deamido-NAD(+) (ammonia route): step 1/1. Functionally, catalyzes the ATP-dependent amidation of deamido-NAD to form NAD. Uses ammonia as a nitrogen source. The protein is NH(3)-dependent NAD(+) synthetase of Bacillus thuringiensis subsp. konkukian (strain 97-27).